The primary structure comprises 397 residues: Elongation factor Tu (397 aa).

The tr-type G domain maps to 10-206 (KPHVNIGTIG…AVDSYIPTPE (197 aa)). Positions 19-26 (GHVDHGKT) are G1. GTP is bound at residue 19–26 (GHVDHGKT). T26 is a Mg(2+) binding site. Positions 60 to 64 (GITIN) are G2. The interval 81–84 (DCPG) is G3. GTP-binding positions include 81-85 (DCPGH) and 136-139 (NKAD). The interval 136-139 (NKAD) is G4. The segment at 174 to 176 (SAL) is G5.

The protein belongs to the TRAFAC class translation factor GTPase superfamily. Classic translation factor GTPase family. EF-Tu/EF-1A subfamily. Monomer.

Its subcellular location is the cytoplasm. The enzyme catalyses GTP + H2O = GDP + phosphate + H(+). Functionally, GTP hydrolase that promotes the GTP-dependent binding of aminoacyl-tRNA to the A-site of ribosomes during protein biosynthesis. This is Elongation factor Tu from Clostridium beijerinckii (strain ATCC 51743 / NCIMB 8052) (Clostridium acetobutylicum).